A 138-amino-acid polypeptide reads, in one-letter code: Flagellar basal body rod protein FlgB (138 aa).

It belongs to the flagella basal body rod proteins family. The basal body constitutes a major portion of the flagellar organelle and consists of a number of rings mounted on a central rod. In Gram-negative bacteria, at least four rings, L, P, S and M are present, whereas Gram-positive bacteria lack the L and P rings. The rod consists of about 26 subunits of FlgG in the distal portion, and FlgB, FlgC and FlgF build up the proximal portion of the rod with about 6 subunits each. Rod assembly occurs by export via the flagellum-specific pathway of its constituent proteins and by their incorporation into the rod structure in the probable order of FlgB, FlgC, FlgF and FlgG. Another protein, FliE, also assembles onto the stable rod structure. Interacts with FliE and peptidoglycan hydrolase FlgJ (via N-terminus), which seems to function as a scaffold or cap for rod assembly.

The protein resides in the bacterial flagellum basal body. In terms of biological role, structural component of flagellum, the bacterial motility apparatus. Part of the rod structure of flagellar basal body. The chain is Flagellar basal body rod protein FlgB (flgB) from Salmonella typhimurium (strain LT2 / SGSC1412 / ATCC 700720).